The chain runs to 318 residues: D-alanine--D-alanine ligase (318 aa).

Positions 116–315 (KQVWQSLGLP…FEQLSLAVLA (200 aa)) constitute an ATP-grasp domain. An ATP-binding site is contributed by 146 to 201 (MSRLGDLVMVKPAQEGSSIGMAKVSNAQQLAAAIQQAFEYDDKVLLEQFIQGSEYT). 3 residues coordinate Mg(2+): Asp269, Glu282, and Asn284.

This sequence belongs to the D-alanine--D-alanine ligase family. The cofactor is Mg(2+). Mn(2+) serves as cofactor.

The protein resides in the cytoplasm. The enzyme catalyses 2 D-alanine + ATP = D-alanyl-D-alanine + ADP + phosphate + H(+). It participates in cell wall biogenesis; peptidoglycan biosynthesis. Functionally, cell wall formation. The sequence is that of D-alanine--D-alanine ligase from Pseudoalteromonas atlantica (strain T6c / ATCC BAA-1087).